Consider the following 180-residue polypeptide: Trichosurin (180 aa).

Residues Met-1–Gly-15 form the signal peptide. 2 N-linked (GlcNAc...) asparagine glycosylation sites follow: Asn-67 and Asn-148. Cysteines 87 and 180 form a disulfide.

Belongs to the calycin superfamily. Lipocalin family. Homodimer. As to expression, milk.

It is found in the secreted. This is Trichosurin from Trichosurus vulpecula (Brush-tailed possum).